The primary structure comprises 177 residues: Crossover junction endodeoxyribonuclease RuvC (177 aa).

Residues D7, E68, and D141 contribute to the active site. D7, E68, and D141 together coordinate Mg(2+).

This sequence belongs to the RuvC family. As to quaternary structure, homodimer which binds Holliday junction (HJ) DNA. The HJ becomes 2-fold symmetrical on binding to RuvC with unstacked arms; it has a different conformation from HJ DNA in complex with RuvA. In the full resolvosome a probable DNA-RuvA(4)-RuvB(12)-RuvC(2) complex forms which resolves the HJ. It depends on Mg(2+) as a cofactor.

It localises to the cytoplasm. The catalysed reaction is Endonucleolytic cleavage at a junction such as a reciprocal single-stranded crossover between two homologous DNA duplexes (Holliday junction).. Functionally, the RuvA-RuvB-RuvC complex processes Holliday junction (HJ) DNA during genetic recombination and DNA repair. Endonuclease that resolves HJ intermediates. Cleaves cruciform DNA by making single-stranded nicks across the HJ at symmetrical positions within the homologous arms, yielding a 5'-phosphate and a 3'-hydroxyl group; requires a central core of homology in the junction. The consensus cleavage sequence is 5'-(A/T)TT(C/G)-3'. Cleavage occurs on the 3'-side of the TT dinucleotide at the point of strand exchange. HJ branch migration catalyzed by RuvA-RuvB allows RuvC to scan DNA until it finds its consensus sequence, where it cleaves and resolves the cruciform DNA. This Nocardioides sp. (strain ATCC BAA-499 / JS614) protein is Crossover junction endodeoxyribonuclease RuvC.